We begin with the raw amino-acid sequence, 238 residues long: Ankyrin repeat domain-containing protein 49 (238 aa).

Residues 38-57 (TGTQSLWVGNSDEDEEQEEK) form a disordered region. S48 is modified (phosphoserine). The segment covering 48–57 (SDEDEEQEEK) has biased composition (acidic residues). 4 ANK repeats span residues 72–105 (DPSK…TRDE), 106–135 (DEYT…DVHA), 139–168 (DGWT…DINA), and 172–205 (GLLT…ELKN).

Expressed in spermatogonia, spermatocytes and round spermatids.

It localises to the nucleus. Functionally, may have a role in spermatogenesis where it promotes autophagy in response to serum starvation, via the NF-kappaB pathway. In Mus musculus (Mouse), this protein is Ankyrin repeat domain-containing protein 49 (Ankrd49).